A 557-amino-acid chain; its full sequence is Probable protein kinase UbiB (557 aa).

The 389-residue stretch at S121 to A509 folds into the Protein kinase domain. ATP is bound by residues L127–V135 and K154. Catalysis depends on D289, which acts as the Proton acceptor. 2 consecutive transmembrane segments (helical) span residues V506–H526 and V535–L555.

The protein belongs to the ABC1 family. UbiB subfamily.

It localises to the cell inner membrane. It participates in cofactor biosynthesis; ubiquinone biosynthesis [regulation]. Is probably a protein kinase regulator of UbiI activity which is involved in aerobic coenzyme Q (ubiquinone) biosynthesis. In Xanthomonas euvesicatoria pv. vesicatoria (strain 85-10) (Xanthomonas campestris pv. vesicatoria), this protein is Probable protein kinase UbiB.